The following is a 485-amino-acid chain: Adenosylhomocysteinase (485 aa).

Thr-64, Asp-139, and Glu-205 together coordinate substrate. Position 206-208 (206-208 (TTT)) interacts with NAD(+). The substrate site is built by Lys-235 and Asp-239. Residues Asn-240, 269 to 274 (GYGDVG), Glu-292, Asn-327, 348 to 350 (IGH), and Asn-397 contribute to the NAD(+) site.

The protein belongs to the adenosylhomocysteinase family. NAD(+) is required as a cofactor.

The enzyme catalyses S-adenosyl-L-homocysteine + H2O = L-homocysteine + adenosine. Its pathway is amino-acid biosynthesis; L-homocysteine biosynthesis; L-homocysteine from S-adenosyl-L-homocysteine: step 1/1. In terms of biological role, adenosylhomocysteine is a competitive inhibitor of S-adenosyl-L-methionine-dependent methyl transferase reactions; therefore adenosylhomocysteinase may play a key role in the control of methylations via regulation of the intracellular concentration of adenosylhomocysteine. In Phalaenopsis sp. (Moth orchid), this protein is Adenosylhomocysteinase (SAHH).